The primary structure comprises 160 residues: Transcriptional repressor NrdR (160 aa).

Residues M1–T11 are compositionally biased toward polar residues. The interval M1–E20 is disordered. A zinc finger lies at C3 to C34. One can recognise an ATP-cone domain in the interval L49–D139.

It belongs to the NrdR family. Zn(2+) is required as a cofactor.

In terms of biological role, negatively regulates transcription of bacterial ribonucleotide reductase nrd genes and operons by binding to NrdR-boxes. The polypeptide is Transcriptional repressor NrdR (Nitrobacter hamburgensis (strain DSM 10229 / NCIMB 13809 / X14)).